The chain runs to 525 residues: Patatin-like protein 8 (525 aa).

The tract at residues 1-50 (MNRRYEKPPPLSVSSKGKKKHFVNHTAPNTPGNYERTQTSPTLSTARSHE) is disordered. The span at 26 to 46 (TAPNTPGNYERTQTSPTLSTA) shows a compositional bias: polar residues. In terms of domain architecture, PNPLA spans 124–338 (LSIDGGGMRG…AMSNPTAAAI (215 aa)). Positions 128–133 (GGGMRG) match the GXGXXG motif. Ser168 acts as the Nucleophile in catalysis.

The protein belongs to the patatin family. Specifically expressed in roots.

Possesses non-specific lipolytic acyl hydrolase (LAH) activity. Hydrolyzes phospholipids as well as galactolipids. May play a role in disease resistance. This chain is Patatin-like protein 8 (PLP8), found in Arabidopsis thaliana (Mouse-ear cress).